The chain runs to 197 residues: MTEIFSDTSIRQLSQMLLSLIFFHISEYILAITIHGASNVTLSSLLITKHYALAMLLSLLEYLTEIILFPGLKQHWWVSNFGLIMIIVGEIIRKAAIITAGRSFTHLIKINYEEHHGLVTHGVYRLMRHPSYCGFLIWSVGTQVMLCNPVSAVAFAVVVWRFFAQRIPYEEYFLNQFFGVQYLEYAESVASGVPFVN.

A run of 3 helical transmembrane segments spans residues 16-36 (MLLS…TIHG), 52-72 (ALAM…FPGL), and 81-101 (FGLI…ITAG). S-adenosyl-L-methionine-binding positions include 116-119 (HGLV), tyrosine 124, and 129-132 (HPSY). A helical membrane pass occupies residues 140 to 160 (VGTQVMLCNPVSAVAFAVVVW). Arginine 166 serves as a coordination point for substrate. S-adenosyl-L-methionine is bound at residue glutamate 170.

This sequence belongs to the class VI-like SAM-binding methyltransferase superfamily. Isoprenylcysteine carboxyl methyltransferase family. The cofactor is Zn(2+). Expressed primarily in flowers, stems, leaves and roots. Almost not expressed in siliques. Detected in root tips and vascular tissues of roots, cotyledons, petiols, hypocotyls, filaments, pollen grains and the distal and proximal portions of the gynoecium.

The protein resides in the endoplasmic reticulum membrane. It catalyses the reaction [protein]-C-terminal S-[(2E,6E)-farnesyl]-L-cysteine + S-adenosyl-L-methionine = [protein]-C-terminal S-[(2E,6E)-farnesyl]-L-cysteine methyl ester + S-adenosyl-L-homocysteine. Inhibited by farnesylthioacetic acid (FTAA) and N-acetyl-S-trans, trans-farnesyl-l-cysteine (AFC). Functionally, catalyzes the post-translational methylation of isoprenylated C-terminal cysteine residues, resulting in the modulation of the function of prenylated proteins. Involved in negative regulation of abscisic acid signaling. Carboxyl methylation is a reversible and potentially regulated step in the post-translational modification of prenylated proteins. This Arabidopsis thaliana (Mouse-ear cress) protein is Protein-S-isoprenylcysteine O-methyltransferase A.